The chain runs to 435 residues: MNIERADFVDRVKIFVKAGDGGNGCVSFRREKYVPKGGPDGGDGGDGGFVFLRANPSVSTLIEFVNKRKFVAENGKHGMGKKMKGRNGKDLFIDVPVGTVVKDAVTGEIIADLNEPGKIVCVARGGKGGRGNAHFATSTKQAPLIAERGEKGESRWLELELKILADVGLVGYPNVGKSSLISRISNARPKIANYPFTTLIPNLGVVKYDDFSFVVADIPGLIEGASEGVGLGNVFLRHVERCYLIAHVIDVSGYEREDPVRDYFVIREEMKKYSPFLLEKPEIVVANKIDLIGKEELEKILKRLRDATNREVIPVSALTGEGIDLLVSKLASIVREMKVEKSERKEEKFVKPSPVWRRLPEKFHLEVVKEDEGYWVVEGENLRVWIERFDLNQRDARLMLLQVLEKNGLNNKLKEAGVKEGDVVRIGDFEFEYRE.

Residues 6–164 (ADFVDRVKIF…RWLELELKIL (159 aa)) form the Obg domain. The OBG-type G domain maps to 165–335 (ADVGLVGYPN…LVSKLASIVR (171 aa)). GTP contacts are provided by residues 171–178 (GYPNVGKS), 196–200 (FTTLI), 217–220 (DIPG), 287–290 (NKID), and 316–318 (SAL). Positions 178 and 198 each coordinate Mg(2+). An OCT domain is found at 357-435 (RRLPEKFHLE…IGDFEFEYRE (79 aa)).

The protein belongs to the TRAFAC class OBG-HflX-like GTPase superfamily. OBG GTPase family. In terms of assembly, monomer. Requires Mg(2+) as cofactor.

The protein localises to the cytoplasm. Its function is as follows. An essential GTPase which binds GTP, GDP and possibly (p)ppGpp with moderate affinity, with high nucleotide exchange rates and a fairly low GTP hydrolysis rate. Plays a role in control of the cell cycle, stress response, ribosome biogenesis and in those bacteria that undergo differentiation, in morphogenesis control. This Thermotoga sp. (strain RQ2) protein is GTPase Obg.